Consider the following 95-residue polypeptide: Aspartyl/glutamyl-tRNA(Asn/Gln) amidotransferase subunit C (95 aa).

It belongs to the GatC family. Heterotrimer of A, B and C subunits.

The catalysed reaction is L-glutamyl-tRNA(Gln) + L-glutamine + ATP + H2O = L-glutaminyl-tRNA(Gln) + L-glutamate + ADP + phosphate + H(+). It catalyses the reaction L-aspartyl-tRNA(Asn) + L-glutamine + ATP + H2O = L-asparaginyl-tRNA(Asn) + L-glutamate + ADP + phosphate + 2 H(+). Functionally, allows the formation of correctly charged Asn-tRNA(Asn) or Gln-tRNA(Gln) through the transamidation of misacylated Asp-tRNA(Asn) or Glu-tRNA(Gln) in organisms which lack either or both of asparaginyl-tRNA or glutaminyl-tRNA synthetases. The reaction takes place in the presence of glutamine and ATP through an activated phospho-Asp-tRNA(Asn) or phospho-Glu-tRNA(Gln). The protein is Aspartyl/glutamyl-tRNA(Asn/Gln) amidotransferase subunit C of Acidiphilium cryptum (strain JF-5).